We begin with the raw amino-acid sequence, 371 residues long: Aurora kinase (371 aa).

2 stretches are compositionally biased toward polar residues: residues 1-15 (MSMKQLETSMSSVSL) and 48-80 (RISTTQPQTYYRPTNLTKTPASQVSRRSSYTTD). Positions 1 to 84 (MSMKQLETSM…SSYTTDPPSP (84 aa)) are disordered. One can recognise a Protein kinase domain in the interval 99-350 (FEIGKALGKG…LKDMHKHPWI (252 aa)). Residues 105 to 113 (LGKGKFGKV) and Lys128 contribute to the ATP site. The active-site Proton acceptor is the Asp222.

Belongs to the protein kinase superfamily. Ser/Thr protein kinase family. Aurora subfamily.

Its subcellular location is the nucleus. The protein localises to the cytoplasm. It localises to the cytoskeleton. The protein resides in the spindle. It is found in the chromosome. Its subcellular location is the centromere. The protein localises to the kinetochore. It catalyses the reaction L-seryl-[protein] + ATP = O-phospho-L-seryl-[protein] + ADP + H(+). The catalysed reaction is L-threonyl-[protein] + ATP = O-phospho-L-threonyl-[protein] + ADP + H(+). In terms of biological role, component of the chromosomal passenger complex (CPC), a complex that acts as a key regulator of chromosome segregation and cytokinesis. Has a role in error-correction of aberrent kinetochore-microtubule attachments to ensure that sister kinetochores become bioriented and connect to opposite poles by promoting spindle assembly checkpoint signaling. This Yarrowia lipolytica (strain CLIB 122 / E 150) (Yeast) protein is Aurora kinase (IPL1).